The following is a 78-amino-acid chain: MRSAVIVTMLVVVALAALLTQGQDLKYQEREMVAELAQQIYRVAQAPWAGAVGPHKRNSELINSILGLPKVMNDAGRR.

Residues 1-22 (MRSAVIVTMLVVVALAALLTQG) form the signal peptide. A75 carries the alanine amide modification.

The protein belongs to the arthropod PDH family. In terms of tissue distribution, expressed in eyestalk tissue and cerebral ganglia.

The protein localises to the secreted. Its function is as follows. The pigment-dispersing hormone causes the migration of the distal retinal pigment into the proximal end of the pigment chromatophore cells and thus decreases the amount of light entering the retinulas. May also function as a neurotransmitter and/or neuromodulator. The protein is Pigment-dispersing hormone peptides of Carcinus maenas (Common shore crab).